The chain runs to 143 residues: Nucleoside diphosphate kinase (143 aa).

Residues Lys-11, Phe-59, Arg-87, Thr-93, Arg-104, and Asn-114 each contribute to the ATP site. His-117 acts as the Pros-phosphohistidine intermediate in catalysis.

The protein belongs to the NDK family. As to quaternary structure, homotetramer. Mg(2+) is required as a cofactor.

It is found in the cytoplasm. It catalyses the reaction a 2'-deoxyribonucleoside 5'-diphosphate + ATP = a 2'-deoxyribonucleoside 5'-triphosphate + ADP. It carries out the reaction a ribonucleoside 5'-diphosphate + ATP = a ribonucleoside 5'-triphosphate + ADP. Its function is as follows. Major role in the synthesis of nucleoside triphosphates other than ATP. The ATP gamma phosphate is transferred to the NDP beta phosphate via a ping-pong mechanism, using a phosphorylated active-site intermediate. The polypeptide is Nucleoside diphosphate kinase (Sodalis glossinidius (strain morsitans)).